The primary structure comprises 170 residues: Protein BTG1 (170 aa).

This sequence belongs to the BTG family.

Functionally, anti-proliferative protein. This chain is Protein BTG1 (BTG1), found in Gallus gallus (Chicken).